The chain runs to 418 residues: D-amino acid dehydrogenase (418 aa).

3-17 (VLVLGAGVAGVSSAW) is a binding site for FAD.

This sequence belongs to the DadA oxidoreductase family. Requires FAD as cofactor.

The enzyme catalyses a D-alpha-amino acid + A + H2O = a 2-oxocarboxylate + AH2 + NH4(+). Oxidative deamination of D-amino acids. This chain is D-amino acid dehydrogenase, found in Neisseria meningitidis serogroup A / serotype 4A (strain DSM 15465 / Z2491).